The primary structure comprises 326 residues: ATP synthase gamma chain (326 aa).

Belongs to the ATPase gamma chain family. As to quaternary structure, F-type ATPases have 2 components, CF(1) - the catalytic core - and CF(0) - the membrane proton channel. CF(1) has five subunits: alpha(3), beta(3), gamma(1), delta(1), epsilon(1). CF(0) has three main subunits: a, b and c.

The protein resides in the cell membrane. Functionally, produces ATP from ADP in the presence of a proton gradient across the membrane. The gamma chain is believed to be important in regulating ATPase activity and the flow of protons through the CF(0) complex. The polypeptide is ATP synthase gamma chain (Rhodococcus jostii (strain RHA1)).